The following is a 93-amino-acid chain: DNA-binding protein Fis (93 aa).

A DNA-binding region (H-T-H motif) is located at residues 74–93; that stretch reads QTRAALMMGINRGTLRKKLK.

The protein belongs to the transcriptional regulatory Fis family. Homodimer.

In terms of biological role, activates ribosomal RNA transcription. Plays a direct role in upstream activation of rRNA promoters. The sequence is that of DNA-binding protein Fis from Klebsiella pneumoniae.